Reading from the N-terminus, the 111-residue chain is uncharacterized protein (111 aa).

To B.subtilis XkdW.

This is an uncharacterized protein from Bacillus subtilis (strain 168).